A 172-amino-acid polypeptide reads, in one-letter code: Chromosome-anchoring protein RacA (172 aa).

The H-T-H motif DNA-binding region spans threonine 5–lysine 25. Disordered stretches follow at residues alanine 57–isoleucine 76 and glutamine 142–alanine 172. Positions proline 62–proline 71 are enriched in pro residues. Residues glutamate 83–arginine 146 are a coiled coil. A compositionally biased stretch (polar residues) spans glutamine 142–histidine 151.

Belongs to the RacA family.

It is found in the cytoplasm. Required for the formation of axial filaments and for anchoring the origin regions at the cell poles in sporulating cells, thus ensuring proper chromosome segregation in the prespore. Binds in a dispersed manner throughout the chromosome but preferentially to sites clustered in the origin portion of the chromosome, causing condensation of the chromosome and its remodeling into an elongated, anchored structure. In Geobacillus kaustophilus (strain HTA426), this protein is Chromosome-anchoring protein RacA.